The following is a 292-amino-acid chain: GTP cyclohydrolase FolE2 (292 aa).

The protein belongs to the GTP cyclohydrolase IV family.

It carries out the reaction GTP + H2O = 7,8-dihydroneopterin 3'-triphosphate + formate + H(+). It participates in cofactor biosynthesis; 7,8-dihydroneopterin triphosphate biosynthesis; 7,8-dihydroneopterin triphosphate from GTP: step 1/1. Functionally, converts GTP to 7,8-dihydroneopterin triphosphate. The polypeptide is GTP cyclohydrolase FolE2 (Staphylococcus aureus (strain MRSA252)).